The chain runs to 231 residues: Ribose-5-phosphate isomerase A (231 aa).

Residues 28 to 31, 83 to 86, and 96 to 99 contribute to the substrate site; these read TGST, DGAD, and KGGG. Glu-105 (proton acceptor) is an active-site residue. A substrate-binding site is contributed by Lys-123.

It belongs to the ribose 5-phosphate isomerase family. As to quaternary structure, homodimer.

The enzyme catalyses aldehydo-D-ribose 5-phosphate = D-ribulose 5-phosphate. The protein operates within carbohydrate degradation; pentose phosphate pathway; D-ribose 5-phosphate from D-ribulose 5-phosphate (non-oxidative stage): step 1/1. Its function is as follows. Catalyzes the reversible conversion of ribose-5-phosphate to ribulose 5-phosphate. In Agrobacterium fabrum (strain C58 / ATCC 33970) (Agrobacterium tumefaciens (strain C58)), this protein is Ribose-5-phosphate isomerase A.